A 1168-amino-acid chain; its full sequence is Myosin IC heavy chain (1168 aa).

One can recognise a Myosin motor domain in the interval 7-666; the sequence is HGVDDMVMLT…SVFSLEELRD (660 aa). ATP is bound at residue 101 to 108; it reads GESGAGKT. S311 is subject to Phosphoserine. Residues 542-564 are actin-binding; the sequence is INILVATLSKCTPHYIRCIKPNE. Positions 704–892 constitute a TH1 domain; it reads KERRRLSLER…KVSVAPGLPP (189 aa). Disordered stretches follow at residues 876 to 909, 921 to 978, and 1036 to 1168; these read DGKV…GGAS, ILGA…APGP, and AAAP…PPGM. Positions 895–909 are enriched in polar residues; it reads APNIQAPQETSGGAS. 2 stretches are compositionally biased toward gly residues: residues 924–939 and 950–959; these read AKGG…GGPS and PGGGGGGPSP. Over residues 960 to 978 the composition is skewed to low complexity; sequence FGGRPSPSGPPAAASAPGP. Residues 976–1035 enclose the SH3 domain; the sequence is PGPEQARALYDFAAENPDELTFNEGAVVTVINKSNPDWWEGELNGQRGVFPASYVELIPR. Over residues 1040–1052 the composition is skewed to pro residues; that stretch reads APGPSGGPRPAPP. 2 stretches are compositionally biased toward gly residues: residues 1063-1083 and 1090-1099; these read GGPG…GRGG and GRAGPPGGRG. Low complexity predominate over residues 1100 to 1112; the sequence is MPAPGGAAPRGRG. The segment covering 1120–1141 has biased composition (gly residues); the sequence is GPPGGGRGGAPPPGGMRGRGGP. Over residues 1152-1161 the composition is skewed to low complexity; that stretch reads GGMMPPRGRA.

This sequence belongs to the TRAFAC class myosin-kinesin ATPase superfamily. Myosin family. As to quaternary structure, myosin I heavy chain is single-headed. Dimer of a heavy and a light chain. Inability to self-assemble into filaments.

Myosin is a protein that binds to F-actin and has ATPase activity that is activated by F-actin. The polypeptide is Myosin IC heavy chain (MIC) (Acanthamoeba castellanii (Amoeba)).